Here is a 301-residue protein sequence, read N- to C-terminus: Oxygen-dependent coproporphyrinogen-III oxidase (301 aa).

Ser-94 contributes to the substrate binding site. A divalent metal cation is bound by residues His-98 and His-108. His-108 (proton donor) is an active-site residue. 110-112 contributes to the substrate binding site; the sequence is NVR. 2 residues coordinate a divalent metal cation: His-147 and His-177. The segment at 242–277 is important for dimerization; that stretch reads YVEFNLVYDRGTLFGLQSGGRTESILMSMPPLARWE. Residue 260–262 participates in substrate binding; the sequence is GGR.

Belongs to the aerobic coproporphyrinogen-III oxidase family. In terms of assembly, homodimer. The cofactor is a divalent metal cation.

Its subcellular location is the cytoplasm. It carries out the reaction coproporphyrinogen III + O2 + 2 H(+) = protoporphyrinogen IX + 2 CO2 + 2 H2O. Its pathway is porphyrin-containing compound metabolism; protoporphyrin-IX biosynthesis; protoporphyrinogen-IX from coproporphyrinogen-III (O2 route): step 1/1. Involved in the heme biosynthesis. Catalyzes the aerobic oxidative decarboxylation of propionate groups of rings A and B of coproporphyrinogen-III to yield the vinyl groups in protoporphyrinogen-IX. The chain is Oxygen-dependent coproporphyrinogen-III oxidase from Photobacterium profundum (strain SS9).